Reading from the N-terminus, the 202-residue chain is Protein-methionine-sulfoxide reductase heme-binding subunit MsrQ (202 aa).

6 helical membrane-spanning segments follow: residues 8–28 (LAVFLGALAVPAWWLYQAWIF), 42–62 (LGLGALVLLLLTLAMTPLQKL), 75–95 (LGLWCFTYVLLHLSAYCVFIL), 110–130 (PYIIVGMLGFICLFLLAITSN), 147–167 (LVYLILGLGLLHMLWVVRADL), and 169–189 (EWTLYAVVGASLMLLRLPSIA).

It belongs to the MsrQ family. Heterodimer of a catalytic subunit (MsrP) and a heme-binding subunit (MsrQ). FMN is required as a cofactor. The cofactor is heme b.

It localises to the cell inner membrane. Its function is as follows. Part of the MsrPQ system that repairs oxidized periplasmic proteins containing methionine sulfoxide residues (Met-O), using respiratory chain electrons. Thus protects these proteins from oxidative-stress damage caused by reactive species of oxygen and chlorine generated by the host defense mechanisms. MsrPQ is essential for the maintenance of envelope integrity under bleach stress, rescuing a wide series of structurally unrelated periplasmic proteins from methionine oxidation. MsrQ provides electrons for reduction to the reductase catalytic subunit MsrP, using the quinone pool of the respiratory chain. In Pseudomonas aeruginosa (strain LESB58), this protein is Protein-methionine-sulfoxide reductase heme-binding subunit MsrQ.